Here is a 628-residue protein sequence, read N- to C-terminus: Chaperone protein HtpG (628 aa).

Residues 1-339 form an a; substrate-binding region; the sequence is MSNNQQTLGF…SNDLPLNVSR (339 aa). The segment at 340 to 556 is b; sequence EILQDNKTTA…NDQMTTQMAK (217 aa). Residues 557–628 are c; the sequence is LFAMSGQPVP…IKRVNTLLAG (72 aa).

Belongs to the heat shock protein 90 family. In terms of assembly, homodimer.

Its subcellular location is the cytoplasm. Its function is as follows. Molecular chaperone. Has ATPase activity. This is Chaperone protein HtpG from Actinobacillus succinogenes (strain ATCC 55618 / DSM 22257 / CCUG 43843 / 130Z).